Here is a 1465-residue protein sequence, read N- to C-terminus: MSDLFAKLMDQIEMPLDMRRSSAFSSADIIEVKVHSVSRLWEFHFAFAAVLPIATYRELHDRLIRTFEAADIKVTFDIQAAQVDYSDDLLQAYYQEAFEHAPCNSASFKSSFSKLKVTYENDKLIIAAPRFVNNDHFRKNHLPNLVKQLEAFGFGTLTIDMVSDQEMTEHLTKDFVSSRQALVKKAVQDNLEAQKSLEAMMPPVEEATPAPKFDYKERAAKRQAGFEKATITPMIEIETEENRIVFEGMVFDVERKTTRTGRHIINFKMTDYTSSFALQKWAKDDEELRKFDMIAKGAWLRVQGNIETNPFTKSLTMNVQQVKEIVHHERKDLMPEGQKRVELHAHTNMSTMDALPTVESLIDTAAKWGHKAVAITDHANVQSFPHGYHRARKAGIKAIFGLEANIVEDKAPISYDPVDMDLHEATYVVFDVETTGLSAMNNDLIQIAASKMFKGNIVEQFDEFIDPGHPLSAFTTELTGITDKHLQGAKPLVTVLKAFQDFCKDSILVAHNASFDVGFMNANYERHDLPKITQPVIDTLEFARNLYPEYKRHGLGPLTKRFQVSLDHHHMANYDAEATGRLLFIFLRDAREKHGIKNLLQLNTDLVAEDSYKKARIKHATIYVQNQVGLKNMFKLVSLSNIKYFEGVPRIPRTVLDAHREGLLLGTACSDGEVFDAVLTKGIDAAVDLAKYYDFIEIMPPAIYQPLVVRELIKDQAGIEQVIRDLIEVGKRANKPVLATGNVHYLEPEEEIYREIIVRSLGQGAMINRTIGRGEGAQPAPLPKAHFRTTNEMLDEFAFLGKDLAYQVVVENTQDFADRIEEVEVVKGDLYTPYIDKAEETVAELTYQKAFEIYGNPLPDIIDLRIEKELTSILGNGFAVIYLASQMLVNRSNERGYLVGSRGSVGSSFVATMIGITEVNPMPPHYVCPSCQHSEFITDGSVGSGYDLPNKPCPKCGTPYQKDGQDIPFETFLGFDGDKVPDIDLNFSGDDQPSAHLDVRDIFGDEYAFRAGTVGTVAEKTAYGFVKGYERDYGKFYRDAEVDRLAAGAAGVKRTTGQHPGGIVVIPNYMDVYDFTPVQYPADDVTASWQTTHFNFHDIDENVLKLDILGHDDPTMIRKLQDLSGIDPITIPADDPGVMALFSGTEILGVTPEQIGTPTGMLGIPEFGTNFVRGMVNETHPTTFAELLQLSGLSHGTDVWLGNAQDLIKEGVATLKTVIGCRDDIMVYLMHAGLEPKMAFTIMERVRKGLWLKISEEERNGYIDAMRENNVPDWYIESCGKIKYMFPKAHAAAYVLMALRVAYFKVHHPIMYYCAYFSIRAKAFELKTMSDGLDAVKARMEDITIKRKNNEATNVENDLFTTLEIVNEMLERGFKFGKLDLYKSDAIEFQIKGDTLIPPFIALEGLGENVAKQIVKARQEGEFLSKMELRKRGGASSTLVEKMDEMGILGNMPEDNQLSLFDDFF.

The Exonuclease domain occupies 427–583 (YVVFDVETTG…YDAEATGRLL (157 aa)).

It belongs to the DNA polymerase type-C family. PolC subfamily.

The protein resides in the cytoplasm. It carries out the reaction DNA(n) + a 2'-deoxyribonucleoside 5'-triphosphate = DNA(n+1) + diphosphate. Functionally, required for replicative DNA synthesis. This DNA polymerase also exhibits 3' to 5' exonuclease activity. This Streptococcus pyogenes serotype M5 (strain Manfredo) protein is DNA polymerase III PolC-type.